The primary structure comprises 763 residues: Cadherin-like protein 26 (763 aa).

Positions 1-20 (MDTRGCAWLLLLLSLPQGQS) are cleaved as a signal peptide. Cadherin domains follow at residues 21 to 140 (HQPL…APQF), 141 to 250 (PEKE…MPTF), 251 to 371 (MEDR…PPAF), and 370 to 478 (AFHP…APTL). At 21 to 590 (HQPLHRSKRR…SECEEPSDTW (570 aa)) the chain is on the extracellular side. N-linked (GlcNAc...) asparagine glycosylation is found at N56, N60, and N146. N-linked (GlcNAc...) asparagine glycans are attached at residues N394 and N440. A helical transmembrane segment spans residues 591-611 (LLWWALSPVGAALMVLSAALL). Residues 612-763 (CLLRCSCTFG…AMCFTSRVPS (152 aa)) lie on the Cytoplasmic side of the membrane.

In terms of assembly, homodimer. Component of a cadherin:catenin adhesion complex composed of at least of CDH26, beta-catenin/CTNNB1, alpha-catenin/CTNNA1 and p120 catenin/CTNND1. N-glycosylated.

The protein localises to the cell membrane. Functionally, cadherins are calcium-dependent cell adhesion proteins. They preferentially interact with themselves in a homophilic manner in connecting cells; cadherins may thus contribute to the sorting of heterogeneous cell types. Ligand for integrins alpha-E/beta-7, ITGAE:ITGAB7, alpha-4/beta-7, ITGA4:ITGAB7 and alpha-4/beta-1, ITGA4:ITGAB1 through which modulates CD4(+) T cells activation. The protein is Cadherin-like protein 26 (Cdh26) of Mus musculus (Mouse).